The primary structure comprises 37 residues: Large ribosomal subunit protein bL36c (37 aa).

The protein belongs to the bacterial ribosomal protein bL36 family.

Its subcellular location is the plastid. The polypeptide is Large ribosomal subunit protein bL36c (Helicosporidium sp. subsp. Simulium jonesii (Green alga)).